An 83-amino-acid chain; its full sequence is RNA-binding protein Hfq (83 aa).

Residues 10–70 (DAFLNQLRKE…ISTVSPSRPV (61 aa)) form the Sm domain.

This sequence belongs to the Hfq family. Homohexamer.

Functionally, RNA chaperone that binds small regulatory RNA (sRNAs) and mRNAs to facilitate mRNA translational regulation in response to envelope stress, environmental stress and changes in metabolite concentrations. Also binds with high specificity to tRNAs. The sequence is that of RNA-binding protein Hfq from Desulforudis audaxviator (strain MP104C).